The chain runs to 396 residues: Acetate kinase (396 aa).

Asn-7 contributes to the Mg(2+) binding site. Lys-14 provides a ligand contact to ATP. Arg-86 provides a ligand contact to substrate. Asp-143 functions as the Proton donor/acceptor in the catalytic mechanism. ATP-binding positions include 203-207, 277-279, and 325-329; these read HLGNG, DMR, and GIGEH. Glu-380 is a binding site for Mg(2+).

It belongs to the acetokinase family. As to quaternary structure, homodimer. The cofactor is Mg(2+). It depends on Mn(2+) as a cofactor.

The protein resides in the cytoplasm. The catalysed reaction is acetate + ATP = acetyl phosphate + ADP. It participates in metabolic intermediate biosynthesis; acetyl-CoA biosynthesis; acetyl-CoA from acetate: step 1/2. Catalyzes the formation of acetyl phosphate from acetate and ATP. Can also catalyze the reverse reaction. The sequence is that of Acetate kinase from Sulfurovum sp. (strain NBC37-1).